A 204-amino-acid polypeptide reads, in one-letter code: Proteasome subunit beta type-3 (204 aa).

This sequence belongs to the peptidase T1B family. As to quaternary structure, the 26S proteasome consists of a 20S proteasome core and two 19S regulatory subunits. The 20S proteasome core is composed of 28 subunits that are arranged in four stacked rings, resulting in a barrel-shaped structure. The two end rings are each formed by seven alpha subunits, and the two central rings are each formed by seven beta subunits. The catalytic chamber with the active sites is on the inside of the barrel.

The protein resides in the cytoplasm. It is found in the nucleus. Non-catalytic component of the proteasome, a multicatalytic proteinase complex which is characterized by its ability to cleave peptides with Arg, Phe, Tyr, Leu, and Glu adjacent to the leaving group at neutral or slightly basic pH. The proteasome has an ATP-dependent proteolytic activity. This chain is Proteasome subunit beta type-3 (pbs-3), found in Caenorhabditis elegans.